Consider the following 119-residue polypeptide: Small ribosomal subunit protein uS13 (119 aa).

The disordered stretch occupies residues 93-119 (RRGLPLRGQRTRSNARTRKGKRKPIRS).

Belongs to the universal ribosomal protein uS13 family. As to quaternary structure, part of the 30S ribosomal subunit. Forms a loose heterodimer with protein S19. Forms two bridges to the 50S subunit in the 70S ribosome.

Its function is as follows. Located at the top of the head of the 30S subunit, it contacts several helices of the 16S rRNA. In the 70S ribosome it contacts the 23S rRNA (bridge B1a) and protein L5 of the 50S subunit (bridge B1b), connecting the 2 subunits; these bridges are implicated in subunit movement. Contacts the tRNAs in the A and P-sites. This Coxiella burnetii (strain RSA 493 / Nine Mile phase I) protein is Small ribosomal subunit protein uS13.